The sequence spans 879 residues: Oxysterol-binding protein-related protein 5 (879 aa).

The tract at residues 1 to 73 (MKEEAFLRRR…TPSSATKVPP (73 aa)) is disordered. Phosphoserine is present on Ser-12. Residues 93–123 (VTKKETLKAQKENYRQEKKRATRQLLSALTD) are a coiled coil. The 118-residue stretch at 126–243 (VVIMADSLKI…WLDALELALR (118 aa)) folds into the PH domain. The interval 254–341 (KPGRDGEPGT…TPGAPVRRGT (88 aa)) is disordered. Basic and acidic residues-rich tracts occupy residues 300 to 309 (FSDKSERENP) and 316 to 325 (TQDHSRKTES). A 1,2-diacyl-sn-glycero-3-phospho-(1D-myo-inositol 4-phosphate) is bound by residues 384 to 389 (LSRVVL), 446 to 449 (KPYN), and 478 to 479 (HH). A 1,2-diacyl-sn-glycero-3-phospho-L-serine-binding positions include 384–389 (LSRVVL) and Asn-449. Ser-504 contributes to the a 1,2-diacyl-sn-glycero-3-phospho-L-serine binding site. Residues Lys-670, Glu-674, and Arg-678 each coordinate a 1,2-diacyl-sn-glycero-3-phospho-(1D-myo-inositol 4-phosphate). The segment at 742-806 (TTFLGSPGPR…FVPGGESPCP (65 aa)) is disordered. Phosphoserine is present on Ser-747. Positions 750 to 765 (PRHERSGPDQRLRKAS) are enriched in basic and acidic residues. The segment covering 766–783 (DQPSGHSQATESSGSTPE) has biased composition (polar residues). Residues 860-878 (SWFLLCVFLACQLFINHIL) traverse the membrane as a helical segment.

This sequence belongs to the OSBP family. Ubiquitously expressed.

The protein localises to the endoplasmic reticulum membrane. In terms of biological role, lipid transporter involved in lipid countertransport between the endoplasmic reticulum and the plasma membrane: specifically exchanges phosphatidylserine with phosphatidylinositol 4-phosphate (PI4P), delivering phosphatidylserine to the plasma membrane in exchange for PI4P, which is degraded by the SAC1/SACM1L phosphatase in the endoplasmic reticulum. Binds phosphatidylserine and PI4P in a mutually exclusive manner. May cooperate with NPC1 to mediate the exit of cholesterol from endosomes/lysosomes. Binds 25-hydroxycholesterol and cholesterol. The protein is Oxysterol-binding protein-related protein 5 (OSBPL5) of Homo sapiens (Human).